The primary structure comprises 241 residues: MEKRGESLDLGVRCKRGEERDRRPCWKPSRPGAARGGRGLWTVGGGGSPTETAESQQLGKPPEFWVSAHPGWLQVSCAHRASRWDASRWHPLQRFFARRGVRRPNPSVPSPLPKPPVPSAGSCEPLAPPPTSASGASRSWVTQTLAEAGAYRGCRPAPGSAAGWPRSDRRARLPRKASKPCSPALPSLAACCPQGFLRSGTKRVMCKVLGPGAGVRGTAVECSEQAGVWAHCRPQLTATFS.

Disordered stretches follow at residues 19 to 59 (ERDR…QQLG), 101 to 139 (VRRP…ASRS), and 152 to 182 (RGCR…KPCS). The segment covering 34–48 (ARGGRGLWTVGGGGS) has biased composition (gly residues). The span at 49 to 58 (PTETAESQQL) shows a compositional bias: polar residues. Residues 106–118 (PSVPSPLPKPPVP) are compositionally biased toward pro residues.

This is an uncharacterized protein from Homo sapiens (Human).